Here is a 284-residue protein sequence, read N- to C-terminus: Acetylglutamate kinase (284 aa).

Substrate contacts are provided by residues 66-67, R88, and N179; that span reads GG.

This sequence belongs to the acetylglutamate kinase family. ArgB subfamily.

The protein resides in the cytoplasm. It carries out the reaction N-acetyl-L-glutamate + ATP = N-acetyl-L-glutamyl 5-phosphate + ADP. It functions in the pathway amino-acid biosynthesis; L-arginine biosynthesis; N(2)-acetyl-L-ornithine from L-glutamate: step 2/4. Catalyzes the ATP-dependent phosphorylation of N-acetyl-L-glutamate. In Actinobacillus pleuropneumoniae serotype 3 (strain JL03), this protein is Acetylglutamate kinase.